Consider the following 123-residue polypeptide: Small ribosomal subunit protein uS12cz/uS12cy (123 aa).

Belongs to the universal ribosomal protein uS12 family. As to quaternary structure, part of the 30S ribosomal subunit.

It is found in the plastid. Its subcellular location is the chloroplast. Its function is as follows. With S4 and S5 plays an important role in translational accuracy. Located at the interface of the 30S and 50S subunits. The sequence is that of Small ribosomal subunit protein uS12cz/uS12cy (rps12-A) from Cucumis sativus (Cucumber).